The following is an 89-amino-acid chain: Small ribosomal subunit protein uS15 (89 aa).

The protein belongs to the universal ribosomal protein uS15 family. In terms of assembly, part of the 30S ribosomal subunit. Forms a bridge to the 50S subunit in the 70S ribosome, contacting the 23S rRNA.

One of the primary rRNA binding proteins, it binds directly to 16S rRNA where it helps nucleate assembly of the platform of the 30S subunit by binding and bridging several RNA helices of the 16S rRNA. Functionally, forms an intersubunit bridge (bridge B4) with the 23S rRNA of the 50S subunit in the ribosome. The protein is Small ribosomal subunit protein uS15 of Lactococcus lactis subsp. lactis (strain IL1403) (Streptococcus lactis).